The sequence spans 512 residues: MSGSQDLNDSIRIYNEQLAQVEQALEGTSSGPERESLINLKSDLEELVKLTLETVQHENGDDLNAAASGSNEDDEFALFMREINALDDPGSVDAKPPKPDEVSVDEQEPFKDLVGSKCSAPHIHKWGSKSYHNALICSLDASDLDDVAAKVLFINPTHQEMVPCAYFLEGDCKFNDEMCRFSHGELISINELKEYREPRFELLRKKGCKVLAKNRNRIWSKGTIQTADFETKTCKIQMDEGRHEVELQFENVLPLEGDDVPSSDSESNSDSDEENEDDVVSLQQAQIIERSLLNPAPDQRLGDWEKHTKGIGSKIMLKMGYVVGAGLGSKGEGIVVPVSAQVLPQGRSLDYCMQLREQANGDKNLFSVEKKLQREKRIQEKRDAKNYAANKSKKDVFNFLNSEIFGSSNGSSSSSGSKKPAAKDNQMDLPSCSSKNLNIASLKLSEQMRRLELDIDRLSHSLTRHQPGSKMHSNLQKQIAEKRREISEIKKTEYSISREQQLRNDKRKMTVF.

The segment at 159–186 (QEMVPCAYFLEGDCKFNDEMCRFSHGEL) adopts a C3H1-type zinc-finger fold. Residues 255–280 (LEGDDVPSSDSESNSDSDEENEDDVV) are disordered. Over residues 256-279 (EGDDVPSSDSESNSDSDEENEDDV) the composition is skewed to acidic residues. Residues 308–354 (TKGIGSKIMLKMGYVVGAGLGSKGEGIVVPVSAQVLPQGRSLDYCMQ) form the G-patch domain. Residues 407-417 (SSNGSSSSSGS) are compositionally biased toward low complexity. Residues 407–432 (SSNGSSSSSGSKKPAAKDNQMDLPSC) form a disordered region.

The protein resides in the nucleus. Functionally, transcription repressor. The protein is Zinc finger CCCH-type with G patch domain-containing protein of Aedes aegypti (Yellowfever mosquito).